We begin with the raw amino-acid sequence, 418 residues long: Argininosuccinate synthase (418 aa).

Position 16-24 (Ala-16–Ser-24) interacts with ATP. Tyr-95 is a binding site for L-citrulline. Gly-125 contributes to the ATP binding site. L-aspartate contacts are provided by Thr-127, Asn-131, and Asp-132. Asn-131 serves as a coordination point for L-citrulline. L-citrulline is bound by residues Arg-135, Ser-183, Glu-267, and Tyr-279.

Belongs to the argininosuccinate synthase family. Type 1 subfamily. Homotetramer.

The protein localises to the cytoplasm. It carries out the reaction L-citrulline + L-aspartate + ATP = 2-(N(omega)-L-arginino)succinate + AMP + diphosphate + H(+). Its pathway is amino-acid biosynthesis; L-arginine biosynthesis; L-arginine from L-ornithine and carbamoyl phosphate: step 2/3. The protein is Argininosuccinate synthase of Bifidobacterium adolescentis (strain ATCC 15703 / DSM 20083 / NCTC 11814 / E194a).